Consider the following 238-residue polypeptide: tRNA (guanine-N(7)-)-methyltransferase (238 aa).

Residues Glu68, Glu93, Asp120, and Asp143 each coordinate S-adenosyl-L-methionine. The active site involves Asp143. Residues Lys147, Asp179, and 216–219 each bind substrate; that span reads TKFE.

This sequence belongs to the class I-like SAM-binding methyltransferase superfamily. TrmB family.

It catalyses the reaction guanosine(46) in tRNA + S-adenosyl-L-methionine = N(7)-methylguanosine(46) in tRNA + S-adenosyl-L-homocysteine. It functions in the pathway tRNA modification; N(7)-methylguanine-tRNA biosynthesis. Catalyzes the formation of N(7)-methylguanine at position 46 (m7G46) in tRNA. This chain is tRNA (guanine-N(7)-)-methyltransferase, found in Shewanella sp. (strain MR-4).